A 232-amino-acid polypeptide reads, in one-letter code: Probable proteasome subunit alpha type-3 (232 aa).

It belongs to the peptidase T1A family. As to quaternary structure, the 26S proteasome consists of a 20S proteasome core and two 19S regulatory subunits. The 20S proteasome core is composed of 28 subunits that are arranged in four stacked rings, resulting in a barrel-shaped structure. The two end rings are each formed by seven alpha subunits, and the two central rings are each formed by seven beta subunits. The catalytic chamber with the active sites is on the inside of the barrel.

The protein localises to the cytoplasm. Its subcellular location is the nucleus. The proteasome degrades poly-ubiquitinated proteins in the cytoplasm and in the nucleus. It is essential for the regulated turnover of proteins and for the removal of misfolded proteins. The proteasome is a multicatalytic proteinase complex that is characterized by its ability to cleave peptides with Arg, Phe, Tyr, Leu, and Glu adjacent to the leaving group at neutral or slightly basic pH. It has an ATP-dependent proteolytic activity. In Encephalitozoon cuniculi (strain GB-M1) (Microsporidian parasite), this protein is Probable proteasome subunit alpha type-3 (PRE9).